Consider the following 909-residue polypeptide: GTPase activating protein homolog 4 (909 aa).

The F-BAR domain occupies 1 to 257 (MASLIGSAKL…PTPDFQFESC (257 aa)). The region spanning 322 to 513 (IPIEEIMFKQ…LIIEGYLKLS (192 aa)) is the Rho-GAP domain. Positions 529 to 909 (IPSFSNNNNN…QRVPPPPSQS (381 aa)) are disordered. Composition is skewed to low complexity over residues 533-562 (SNNN…ITTN) and 571-602 (SSTT…TPQQ). Over residues 609–625 (SYQPPQPPPTMAPPPLF) the composition is skewed to pro residues. Residues 651 to 674 (QYTQSSSNLPPIQLGVTNSPSKPQ) show a composition bias toward polar residues. A coiled-coil region spans residues 672–809 (KPQLSDKQKE…QQLQQQSNGS (138 aa)). Positions 675–716 (LSDKQKEKEKEKEKEKEKEKEREKEKEKEKEKEKEKEKEKEK) are enriched in basic and acidic residues. Residues 723 to 741 (SSSTSPNSSSLSISNFLSS) are compositionally biased toward low complexity. A compositionally biased stretch (basic and acidic residues) spans 742–765 (NKDKDKEKDKEKEKEKEKEKDKEI). Residues 767–785 (ATNSTPEKPVSNRMSLIFS) are compositionally biased toward polar residues. Low complexity-rich tracts occupy residues 786–828 (QQLQ…MSPS) and 843–892 (SGTS…ELKS).

The protein resides in the cytoplasm. The protein localises to the contractile vacuole. Rho GTPase-activating protein involved in the signal transduction pathway. The sequence is that of GTPase activating protein homolog 4 (mgp4) from Dictyostelium discoideum (Social amoeba).